The primary structure comprises 204 residues: ATP phosphoribosyltransferase (204 aa).

It belongs to the ATP phosphoribosyltransferase family. Short subfamily. As to quaternary structure, heteromultimer composed of HisG and HisZ subunits.

Its subcellular location is the cytoplasm. The enzyme catalyses 1-(5-phospho-beta-D-ribosyl)-ATP + diphosphate = 5-phospho-alpha-D-ribose 1-diphosphate + ATP. Its pathway is amino-acid biosynthesis; L-histidine biosynthesis; L-histidine from 5-phospho-alpha-D-ribose 1-diphosphate: step 1/9. In terms of biological role, catalyzes the condensation of ATP and 5-phosphoribose 1-diphosphate to form N'-(5'-phosphoribosyl)-ATP (PR-ATP). Has a crucial role in the pathway because the rate of histidine biosynthesis seems to be controlled primarily by regulation of HisG enzymatic activity. This chain is ATP phosphoribosyltransferase, found in Hydrogenobaculum sp. (strain Y04AAS1).